Consider the following 832-residue polypeptide: Vacuolar protein sorting-associated protein 53 homolog (832 aa).

Positions 97-138 (LEEAQKAIQQLFGKIKDIKDKAEKSEQMVKEITRDIKQLDHA) form a coiled coil. Residues Lys-110 and Lys-360 each carry the N6-acetyllysine modification. The disordered stretch occupies residues 373 to 412 (KKLESPPPSTNPFLEDEPTPEMEELATEKGDLDQPKKPKA). The residue at position 377 (Ser-377) is a Phosphoserine. Over residues 386-397 (LEDEPTPEMEEL) the composition is skewed to acidic residues. Phosphothreonine is present on Thr-391. Basic and acidic residues predominate over residues 398–412 (ATEKGDLDQPKKPKA). Phosphoserine is present on Ser-580. Residues 794–822 (LPAPPSGAESSGSLSLTAPTPEQESSRIR) form a disordered region. Residues 799–809 (SGAESSGSLSL) are compositionally biased toward low complexity.

This sequence belongs to the VPS53 family. Component of the Golgi-associated retrograde protein (GARP) complex, also called VFT (VPS fifty-three) complex, composed of VPS51, VPS52, VPS53 and VPS54. Component of the endosome-associated retrograde protein (EARP) complex, composed of VPS51, VPS52, VPS53 and VPS50/Syndetin. EIPR1 interacts with both EARP and GARP complexes and mediates the recruitment of the GARP complex to the trans-Golgi network. Interacts with VPS50 in an EIPR1-independent manner.

It localises to the golgi apparatus. Its subcellular location is the trans-Golgi network membrane. The protein localises to the endosome membrane. It is found in the recycling endosome. In terms of biological role, acts as a component of the GARP complex that is involved in retrograde transport from early and late endosomes to the trans-Golgi network (TGN). The GARP complex is required for the maintenance of the cycling of mannose 6-phosphate receptors between the TGN and endosomes, this cycling is necessary for proper lysosomal sorting of acid hydrolases such as CTSD. Acts as a component of the EARP complex that is involved in endocytic recycling. The EARP complex associates with Rab4-positive endosomes and promotes recycling of internalized transferrin receptor (TFRC) to the plasma membrane. The chain is Vacuolar protein sorting-associated protein 53 homolog (VPS53) from Homo sapiens (Human).